We begin with the raw amino-acid sequence, 931 residues long: Isoleucine--tRNA ligase (931 aa).

Polar residues predominate over residues 1 to 14 (MDYSKTLNLPQTQF). A disordered region spans residues 1–25 (MDYSKTLNLPQTQFPMRGNLPQREP). Residues 57–67 (PYANGHIHLGH) carry the 'HIGH' region motif. Glu559 serves as a coordination point for L-isoleucyl-5'-AMP. A 'KMSKS' region motif is present at residues 600–604 (KMSKS). Lys603 provides a ligand contact to ATP. Positions 898, 901, 918, and 921 each coordinate Zn(2+).

This sequence belongs to the class-I aminoacyl-tRNA synthetase family. IleS type 1 subfamily. As to quaternary structure, monomer. The cofactor is Zn(2+).

The protein localises to the cytoplasm. It catalyses the reaction tRNA(Ile) + L-isoleucine + ATP = L-isoleucyl-tRNA(Ile) + AMP + diphosphate. In terms of biological role, catalyzes the attachment of isoleucine to tRNA(Ile). As IleRS can inadvertently accommodate and process structurally similar amino acids such as valine, to avoid such errors it has two additional distinct tRNA(Ile)-dependent editing activities. One activity is designated as 'pretransfer' editing and involves the hydrolysis of activated Val-AMP. The other activity is designated 'posttransfer' editing and involves deacylation of mischarged Val-tRNA(Ile). The sequence is that of Isoleucine--tRNA ligase from Desulforamulus reducens (strain ATCC BAA-1160 / DSM 100696 / MI-1) (Desulfotomaculum reducens).